The chain runs to 510 residues: Cytochrome P450 52C2 (510 aa).

Residue cysteine 458 coordinates heme.

It belongs to the cytochrome P450 family. Requires heme as cofactor.

The protein localises to the membrane. Its function is as follows. Together with an NADPH cytochrome P450 the enzyme system catalyzes the terminal hydroxylation as the first step in the assimilation of alkanes and fatty acids. This chain is Cytochrome P450 52C2 (CYP52C2), found in Candida maltosa (Yeast).